We begin with the raw amino-acid sequence, 352 residues long: Molybdenum import ATP-binding protein ModC (352 aa).

Residues 1-229 (MLQLDFHQQL…SALRPWLPKD (229 aa)) enclose the ABC transporter domain. Position 31 to 38 (31 to 38 (GVSGAGKT)) interacts with ATP. Residues 289–352 (KSSIRNVLRA…AQIKSVSITA (64 aa)) enclose the Mop domain.

It belongs to the ABC transporter superfamily. Molybdate importer (TC 3.A.1.8) family. As to quaternary structure, the complex is composed of two ATP-binding proteins (ModC), two transmembrane proteins (ModB) and a solute-binding protein (ModA).

The protein localises to the cell inner membrane. It carries out the reaction molybdate(out) + ATP + H2O = molybdate(in) + ADP + phosphate + H(+). Functionally, part of the ABC transporter complex ModABC involved in molybdenum import. Responsible for energy coupling to the transport system. The sequence is that of Molybdenum import ATP-binding protein ModC from Pectobacterium atrosepticum (strain SCRI 1043 / ATCC BAA-672) (Erwinia carotovora subsp. atroseptica).